The following is a 121-amino-acid chain: Large ribosomal subunit protein uL24 (121 aa).

A disordered region spans residues 1–30 (MVRIVSKQPRKQRKARYNAPNHTRGRFLSA).

The protein belongs to the universal ribosomal protein uL24 family. In terms of assembly, part of the 50S ribosomal subunit.

Functionally, one of two assembly initiator proteins, it binds directly to the 5'-end of the 23S rRNA, where it nucleates assembly of the 50S subunit. Its function is as follows. Located at the polypeptide exit tunnel on the outside of the subunit. This is Large ribosomal subunit protein uL24 from Methanoculleus marisnigri (strain ATCC 35101 / DSM 1498 / JR1).